A 156-amino-acid polypeptide reads, in one-letter code: Phosphopantetheine adenylyltransferase (156 aa).

Thr-9 serves as a coordination point for substrate. ATP-binding positions include 9–10 (TF) and His-17. The substrate site is built by Lys-41, Leu-73, and Arg-87. Residues 88–90 (GVR), Glu-98, and 123–129 (WAFVSST) contribute to the ATP site.

This sequence belongs to the bacterial CoaD family. In terms of assembly, homohexamer. Mg(2+) is required as a cofactor.

It is found in the cytoplasm. The enzyme catalyses (R)-4'-phosphopantetheine + ATP + H(+) = 3'-dephospho-CoA + diphosphate. It functions in the pathway cofactor biosynthesis; coenzyme A biosynthesis; CoA from (R)-pantothenate: step 4/5. Reversibly transfers an adenylyl group from ATP to 4'-phosphopantetheine, yielding dephospho-CoA (dPCoA) and pyrophosphate. This Haemophilus influenzae (strain 86-028NP) protein is Phosphopantetheine adenylyltransferase.